We begin with the raw amino-acid sequence, 54 residues long: Putative ankyrin repeat protein RC0701 (54 aa).

Residues 17–46 (SGKTPLDWYSDYNATKIVETLIKNGGNVSS) form an ANK repeat.

The protein is Putative ankyrin repeat protein RC0701 of Rickettsia conorii (strain ATCC VR-613 / Malish 7).